The chain runs to 219 residues: Uracil-DNA glycosylase (219 aa).

The Proton acceptor role is filled by Asp-61.

The protein belongs to the uracil-DNA glycosylase (UDG) superfamily. UNG family.

Its subcellular location is the cytoplasm. The catalysed reaction is Hydrolyzes single-stranded DNA or mismatched double-stranded DNA and polynucleotides, releasing free uracil.. Its function is as follows. Excises uracil residues from the DNA which can arise as a result of misincorporation of dUMP residues by DNA polymerase or due to deamination of cytosine. This chain is Uracil-DNA glycosylase, found in Neisseria meningitidis serogroup B (strain ATCC BAA-335 / MC58).